Consider the following 586-residue polypeptide: Succinate dehydrogenase flavoprotein subunit (586 aa).

FAD-binding positions include 10–15 (GGGLAG) and 33–48 (SIVP…AQGG). His41 carries the post-translational modification Tele-8alpha-FAD histidine. 2 residues coordinate substrate: His236 and Ser250. The Proton acceptor role is filled by Arg285. His352 serves as a coordination point for substrate. An FAD-binding site is contributed by Glu376. Arg386 is a substrate binding site. 391-392 (SL) is an FAD binding site.

This sequence belongs to the FAD-dependent oxidoreductase 2 family. FRD/SDH subfamily. In terms of assembly, in B.subtilis succinate dehydrogenase forms part of an enzyme complex containing three subunits: a flavoprotein, an iron-sulfur protein and cytochrome b-558. Interacts with FloT. The cofactor is FAD.

It localises to the cell membrane. Its subcellular location is the membrane raft. The enzyme catalyses a quinone + succinate = fumarate + a quinol. It functions in the pathway carbohydrate metabolism; tricarboxylic acid cycle; fumarate from succinate (bacterial route): step 1/1. The chain is Succinate dehydrogenase flavoprotein subunit (sdhA) from Bacillus subtilis (strain 168).